Reading from the N-terminus, the 418-residue chain is Serine hydroxymethyltransferase (418 aa).

(6S)-5,6,7,8-tetrahydrofolate-binding positions include L121 and 125 to 127; that span reads GHL. Residue K230 is modified to N6-(pyridoxal phosphate)lysine. Position 355 to 357 (355 to 357) interacts with (6S)-5,6,7,8-tetrahydrofolate; it reads SPF.

Belongs to the SHMT family. As to quaternary structure, homodimer. Pyridoxal 5'-phosphate is required as a cofactor.

It localises to the cytoplasm. The catalysed reaction is (6R)-5,10-methylene-5,6,7,8-tetrahydrofolate + glycine + H2O = (6S)-5,6,7,8-tetrahydrofolate + L-serine. The protein operates within one-carbon metabolism; tetrahydrofolate interconversion. It participates in amino-acid biosynthesis; glycine biosynthesis; glycine from L-serine: step 1/1. Catalyzes the reversible interconversion of serine and glycine with tetrahydrofolate (THF) serving as the one-carbon carrier. This reaction serves as the major source of one-carbon groups required for the biosynthesis of purines, thymidylate, methionine, and other important biomolecules. Also exhibits THF-independent aldolase activity toward beta-hydroxyamino acids, producing glycine and aldehydes, via a retro-aldol mechanism. This Streptococcus agalactiae serotype III (strain NEM316) protein is Serine hydroxymethyltransferase.